The following is a 203-amino-acid chain: Urease accessory protein UreG (203 aa).

14-21 (GPVGSGKT) contributes to the GTP binding site.

The protein belongs to the SIMIBI class G3E GTPase family. UreG subfamily. Homodimer. UreD, UreF and UreG form a complex that acts as a GTP-hydrolysis-dependent molecular chaperone, activating the urease apoprotein by helping to assemble the nickel containing metallocenter of UreC. The UreE protein probably delivers the nickel.

Its subcellular location is the cytoplasm. Its function is as follows. Facilitates the functional incorporation of the urease nickel metallocenter. This process requires GTP hydrolysis, probably effectuated by UreG. The sequence is that of Urease accessory protein UreG from Sinorhizobium fredii (strain NBRC 101917 / NGR234).